We begin with the raw amino-acid sequence, 168 residues long: uncharacterized protein (168 aa).

The helical transmembrane segment at 36 to 56 threads the bilayer; the sequence is LNWWQLIVVVGIAISGIAAIA. Residue N74 is glycosylated (N-linked (GlcNAc...) asparagine; by host). Transmembrane regions (helical) follow at residues 86–106, 115–135, and 143–163; these read FIII…LAWL, KLLT…ALTI, and MVKL…GFFI. N164 carries an N-linked (GlcNAc...) asparagine; by host glycan.

It is found in the membrane. This is an uncharacterized protein from Acanthamoeba polyphaga mimivirus (APMV).